The sequence spans 362 residues: Chorismate synthase (362 aa).

Residue arginine 46 coordinates NADP(+). Residues 122–124 (RSS), 238–239 (NA), glycine 278, 293–297 (KPTPS), and arginine 319 contribute to the FMN site.

It belongs to the chorismate synthase family. Homotetramer. Requires FMNH2 as cofactor.

The enzyme catalyses 5-O-(1-carboxyvinyl)-3-phosphoshikimate = chorismate + phosphate. The protein operates within metabolic intermediate biosynthesis; chorismate biosynthesis; chorismate from D-erythrose 4-phosphate and phosphoenolpyruvate: step 7/7. Functionally, catalyzes the anti-1,4-elimination of the C-3 phosphate and the C-6 proR hydrogen from 5-enolpyruvylshikimate-3-phosphate (EPSP) to yield chorismate, which is the branch point compound that serves as the starting substrate for the three terminal pathways of aromatic amino acid biosynthesis. This reaction introduces a second double bond into the aromatic ring system. The sequence is that of Chorismate synthase from Campylobacter jejuni subsp. jejuni serotype O:2 (strain ATCC 700819 / NCTC 11168).